The following is a 325-amino-acid chain: tRNA N(3)-methylcytidine methyltransferase Mettl2 (325 aa).

Residues Trp-96 and Tyr-100 each contribute to the S-adenosyl-L-methionine site. S-adenosyl-L-homocysteine is bound by residues Tyr-100, His-112, Glu-138, Gly-140, Asp-165, Asp-191, and Ile-212. The S-adenosyl-L-methionine site is built by Gly-140, Asp-165, Asp-191, and Ile-212.

It belongs to the methyltransferase superfamily. METL family. In terms of assembly, interacts with Psn. As to expression, widely expressed. Expressed in ovaries, head, thorax and abdomen of adult flies, and in the CNS of third instar larvae. Isoform 2 is predominantly expressed in larvae and in adult tissues that have been tested.

Functionally, probable methyltransferase. This chain is tRNA N(3)-methylcytidine methyltransferase Mettl2, found in Drosophila melanogaster (Fruit fly).